We begin with the raw amino-acid sequence, 270 residues long: NAD(P)H-hydrate epimerase (270 aa).

The 210-residue stretch at 25–234 (FQQLMDLMQN…DLLAPEEIYQ (210 aa)) folds into the YjeF N-terminal domain. (6S)-NADPHX is bound at residue 73 to 77 (DNGGQ). Residues asparagine 74 and aspartate 144 each coordinate K(+). (6S)-NADPHX contacts are provided by residues 148–154 (GVGLYGH) and glutamate 177. Threonine 180 contacts K(+).

It belongs to the NnrE/AIBP family. K(+) is required as a cofactor.

It carries out the reaction (6R)-NADHX = (6S)-NADHX. The catalysed reaction is (6R)-NADPHX = (6S)-NADPHX. Catalyzes the epimerization of the S- and R-forms of NAD(P)HX, a damaged form of NAD(P)H that is a result of enzymatic or heat-dependent hydration. This is a prerequisite for the S-specific NAD(P)H-hydrate dehydratase to allow the repair of both epimers of NAD(P)HX. The polypeptide is NAD(P)H-hydrate epimerase (Legionella pneumophila (strain Paris)).